The chain runs to 427 residues: Glutamate-1-semialdehyde 2,1-aminomutase (427 aa).

Lysine 265 carries the post-translational modification N6-(pyridoxal phosphate)lysine.

Belongs to the class-III pyridoxal-phosphate-dependent aminotransferase family. HemL subfamily. In terms of assembly, homodimer. The cofactor is pyridoxal 5'-phosphate.

The protein resides in the cytoplasm. The catalysed reaction is (S)-4-amino-5-oxopentanoate = 5-aminolevulinate. Its pathway is porphyrin-containing compound metabolism; protoporphyrin-IX biosynthesis; 5-aminolevulinate from L-glutamyl-tRNA(Glu): step 2/2. The polypeptide is Glutamate-1-semialdehyde 2,1-aminomutase (Bordetella petrii (strain ATCC BAA-461 / DSM 12804 / CCUG 43448)).